Consider the following 89-residue polypeptide: uncharacterized protein (89 aa).

The next 3 membrane-spanning stretches (helical) occupy residues 5–25 (AYLV…KRKA), 36–56 (RLWL…MQTF), and 67–87 (YGVP…YSPF).

Its subcellular location is the cell membrane. This is an uncharacterized protein from Bacillus subtilis (strain 168).